Consider the following 308-residue polypeptide: Putative gluconeogenesis factor (308 aa).

Belongs to the gluconeogenesis factor family.

It is found in the cytoplasm. Required for morphogenesis under gluconeogenic growth conditions. This Pasteurella multocida (strain Pm70) protein is Putative gluconeogenesis factor.